Here is a 465-residue protein sequence, read N- to C-terminus: Glycine--tRNA ligase (465 aa).

Substrate is bound by residues Arg98 and Glu174. Residues 206–208, 216–221, 290–291, and 334–337 each bind ATP; these read RNE, FRTREF, EL, and GADR. Position 221–225 (221–225) interacts with substrate; the sequence is FEQME. Substrate is bound at residue 330 to 334; the sequence is EPSLG.

It belongs to the class-II aminoacyl-tRNA synthetase family. Homodimer.

Its subcellular location is the cytoplasm. It catalyses the reaction tRNA(Gly) + glycine + ATP = glycyl-tRNA(Gly) + AMP + diphosphate. Its function is as follows. Catalyzes the attachment of glycine to tRNA(Gly). The polypeptide is Glycine--tRNA ligase (Agathobacter rectalis (strain ATCC 33656 / DSM 3377 / JCM 17463 / KCTC 5835 / VPI 0990) (Eubacterium rectale)).